The primary structure comprises 185 residues: Ribosome-recycling factor (185 aa).

Belongs to the RRF family.

It is found in the cytoplasm. Its function is as follows. Responsible for the release of ribosomes from messenger RNA at the termination of protein biosynthesis. May increase the efficiency of translation by recycling ribosomes from one round of translation to another. The sequence is that of Ribosome-recycling factor from Nitrosospira multiformis (strain ATCC 25196 / NCIMB 11849 / C 71).